The primary structure comprises 99 residues: U1-theraphotoxin-Lsp1c (99 aa).

Positions 1 to 23 are cleaved as a signal peptide; that stretch reads MRKITIRALLLCSLLLVFHTSAA. The propeptide occupies 24 to 50; it reads AELQAQEGHLMIPGDTDTALETVDDER. Intrachain disulfides connect C54–C67, C58–C91, C72–C74, and C85–C96.

The protein belongs to the neurotoxin 12 (Hwtx-2) family. 04 (lasiotoxin) subfamily. In terms of tissue distribution, expressed by the venom gland.

The protein localises to the secreted. Toxin that causes irreversible contractile paralysis into adult Aedes aegypti resulting in 100% mortality after 24 hours. In Lasiodora sp. (strain IBSP 8539) (Brazilian salmon pink birdeater), this protein is U1-theraphotoxin-Lsp1c.